We begin with the raw amino-acid sequence, 92 residues long: MTTKHVLVSGIVQGVGYRAWARQEATRRNLTGWVRNCADGRVEALLEGEADAVDDMLNAMHQGPALAQVDRILVEEGNNDDDGPRSTHFEVT.

Residues 3–92 (TKHVLVSGIV…GPRSTHFEVT (90 aa)) enclose the Acylphosphatase-like domain. Active-site residues include arginine 18 and asparagine 36.

This sequence belongs to the acylphosphatase family.

The catalysed reaction is an acyl phosphate + H2O = a carboxylate + phosphate + H(+). The chain is Acylphosphatase (acyP) from Alcanivorax borkumensis (strain ATCC 700651 / DSM 11573 / NCIMB 13689 / SK2).